Here is a 279-residue protein sequence, read N- to C-terminus: Movement protein (279 aa).

Positions 247-279 (ESEELNVESPPAAIGSSSASRSEAFRPQVVNGL) are disordered. The segment covering 254-268 (ESPPAAIGSSSASRS) has biased composition (low complexity).

It belongs to the cucumovirus movement protein family.

The protein localises to the host cell junction. It localises to the host plasmodesma. Functionally, transports viral genome to neighboring plant cells directly through plasmosdesmata, without any budding. The movement protein allows efficient cell to cell propagation, by bypassing the host cell wall barrier. Acts by forming a tubular structure at the host plasmodesmata, enlarging it enough to allow free passage of virion capsids. This chain is Movement protein, found in Cucumis sativus (Cucumber).